The chain runs to 408 residues: Phosphoenolpyruvate/phosphate translocator 1, chloroplastic (408 aa).

The transit peptide at Met1–Pro66 directs the protein to the chloroplast. The next 7 membrane-spanning stretches (helical) occupy residues Thr105–Tyr125, Ile139–Ile159, Ile165–Leu185, Pro222–Leu242, Ala245–Phe262, Ile283–Leu303, and Thr375–Tyr395. Residues Ile124–Ser241 form the EamA domain.

The protein belongs to the TPT transporter family. PPT (TC 2.A.7.9) subfamily.

The protein resides in the plastid. Its subcellular location is the chloroplast membrane. Functionally, phosphoenolpyruvate/phosphate translocator that transports phosphoenolpyruvate (PEP) and dihydroxyacetone phosphate. This Oryza sativa subsp. japonica (Rice) protein is Phosphoenolpyruvate/phosphate translocator 1, chloroplastic (PPT1).